A 244-amino-acid polypeptide reads, in one-letter code: Ribonuclease PH (244 aa).

Residues Arg87 and Gly125 to Arg127 contribute to the phosphate site.

It belongs to the RNase PH family. Homohexameric ring arranged as a trimer of dimers.

The enzyme catalyses tRNA(n+1) + phosphate = tRNA(n) + a ribonucleoside 5'-diphosphate. Phosphorolytic 3'-5' exoribonuclease that plays an important role in tRNA 3'-end maturation. Removes nucleotide residues following the 3'-CCA terminus of tRNAs; can also add nucleotides to the ends of RNA molecules by using nucleoside diphosphates as substrates, but this may not be physiologically important. Probably plays a role in initiation of 16S rRNA degradation (leading to ribosome degradation) during starvation. In Synechococcus sp. (strain JA-2-3B'a(2-13)) (Cyanobacteria bacterium Yellowstone B-Prime), this protein is Ribonuclease PH.